Here is a 439-residue protein sequence, read N- to C-terminus: Probable anion transporter 7 (439 aa).

Residues 1 to 28 form the signal peptide; it reads MTALTRMKFPKRYVIVLLTFICTNVCYI. The next 11 helical transmembrane spans lie at 53–73, 81–101, 104–124, 143–163, 167–187, 232–252, 280–300, 312–332, 338–358, 367–387, and 412–432; these read MILS…GWAA, VLLL…LDPK, VILV…FPAI, LTTS…PSLV, GAQS…VIWL, IIFS…HYAL, LPYF…DHLI, KLLN…LPLF, TVLC…GFAV, FAGI…IVGV, and TVFF…LIFS.

This sequence belongs to the major facilitator superfamily. Sodium/anion cotransporter (TC 2.A.1.14) family.

The protein localises to the cell membrane. Functionally, probable anion transporter. This is Probable anion transporter 7 (PHT4;7) from Oryza sativa subsp. japonica (Rice).